The chain runs to 215 residues: S-crystallin 2 (215 aa).

The GST N-terminal domain occupies 2-80 (PSYTLHYFNH…YLAREFGFHG (79 aa)). One can recognise a GST C-terminal domain in the interval 82-215 (NNLDMARVDF…YLKSRSSTDF (134 aa)).

It belongs to the GST superfamily. As to expression, lens.

Its function is as follows. S-crystallins are structural components of squids and octopi eye lens. Contains relatively little GST activity (1/1000 of that of mammalian GST enzyme). In Octopus vulgaris (Common octopus), this protein is S-crystallin 2 (OCTS2).